Here is a 197-residue protein sequence, read N- to C-terminus: Lactoylglutathione lyase-like protein terB (197 aa).

The signal sequence occupies residues 1-19; sequence MARFAVLQLLLPLAAGLTG. N-linked (GlcNAc...) asparagine glycosylation is found at asparagine 82, asparagine 99, and asparagine 140.

This sequence belongs to the glyoxalase I family.

In terms of biological role, lactoylglutathione lyase-like protein; part of the gene cluster that mediates the biosynthesis of terrein, a fungal metabolite with ecological, antimicrobial, antiproliferative, and antioxidative activities. The first step in the pathway is performed by the polyketide synthase terA that produces 4-hydroxy-6-methylpyranon (4-HMP), orsellinic acid (OA), and 2,3-dehydro-6-hydroxymellein (2,3-dehydro-6-HM) by condensing acetyl-CoA with two, three, or four malonyl-CoA units, respectively. 4-HMP and OA are not pathway intermediates, but are rather shunt or side products. 2,3-dehydro-6-HM is further converted to 6-hydroxymellein (6-HM) by the 6-hydroxymellein synthase terB. The monooxygenases terC and terD, the multicopper oxidase terE and the Kelch-like protein terF are then involved in the transformation of 6-HM to terrein. Even if they are co-regulated with the other terrein cluster genes, terH and terI seem to be dispensable for terrein production; whereas one or both of the 2 transporters terG and terJ are probably required for efficient secretion of metabolites. The chain is Lactoylglutathione lyase-like protein terB from Aspergillus terreus (strain NIH 2624 / FGSC A1156).